Reading from the N-terminus, the 461-residue chain is Spermidine coumaroyl-CoA acyltransferase (461 aa).

Residues His-168 and Asp-393 each act as proton acceptor in the active site.

The protein belongs to the plant acyltransferase family. As to quaternary structure, monomer. As to expression, mainly expressed in roots at low levels, specifically, in the root tip.

The enzyme catalyses 2 (E)-4-coumaroyl-CoA + spermidine = N(1),N(8)-bis(coumaroyl)-spermidine + 2 CoA + 2 H(+). It functions in the pathway amine and polyamine metabolism; spermidine metabolism. In terms of biological role, spermidine coumaroyl-CoA acyltransferase that mediates the conversion of spermidine into dicoumaroyl-spermidine. The sequence is that of Spermidine coumaroyl-CoA acyltransferase from Arabidopsis thaliana (Mouse-ear cress).